A 184-amino-acid chain; its full sequence is Protein GrpE (184 aa).

Residues Met-1–Glu-10 show a composition bias toward acidic residues. The tract at residues Met-1–Val-22 is disordered.

It belongs to the GrpE family. As to quaternary structure, homodimer.

Its subcellular location is the cytoplasm. In terms of biological role, participates actively in the response to hyperosmotic and heat shock by preventing the aggregation of stress-denatured proteins, in association with DnaK and GrpE. It is the nucleotide exchange factor for DnaK and may function as a thermosensor. Unfolded proteins bind initially to DnaJ; upon interaction with the DnaJ-bound protein, DnaK hydrolyzes its bound ATP, resulting in the formation of a stable complex. GrpE releases ADP from DnaK; ATP binding to DnaK triggers the release of the substrate protein, thus completing the reaction cycle. Several rounds of ATP-dependent interactions between DnaJ, DnaK and GrpE are required for fully efficient folding. In Chlamydia pneumoniae (Chlamydophila pneumoniae), this protein is Protein GrpE.